The primary structure comprises 98 residues: NADH-ubiquinone oxidoreductase chain 4L (98 aa).

3 consecutive transmembrane segments (helical) span residues 1–21, 28–48, and 59–79; these read MTPL…GVLI, STLL…SLLI, and APLI…ALLV.

Belongs to the complex I subunit 4L family. In terms of assembly, core subunit of respiratory chain NADH dehydrogenase (Complex I) which is composed of 45 different subunits.

The protein resides in the mitochondrion inner membrane. The enzyme catalyses a ubiquinone + NADH + 5 H(+)(in) = a ubiquinol + NAD(+) + 4 H(+)(out). In terms of biological role, core subunit of the mitochondrial membrane respiratory chain NADH dehydrogenase (Complex I) which catalyzes electron transfer from NADH through the respiratory chain, using ubiquinone as an electron acceptor. Part of the enzyme membrane arm which is embedded in the lipid bilayer and involved in proton translocation. The chain is NADH-ubiquinone oxidoreductase chain 4L (MT-ND4L) from Tarsipes rostratus (Honey possum).